We begin with the raw amino-acid sequence, 421 residues long: Serine hydroxymethyltransferase (421 aa).

Residues L121 and 125 to 127 contribute to the (6S)-5,6,7,8-tetrahydrofolate site; that span reads GHL. Position 229 is an N6-(pyridoxal phosphate)lysine (K229).

The protein belongs to the SHMT family. Homodimer. Requires pyridoxal 5'-phosphate as cofactor.

The protein localises to the cytoplasm. The enzyme catalyses (6R)-5,10-methylene-5,6,7,8-tetrahydrofolate + glycine + H2O = (6S)-5,6,7,8-tetrahydrofolate + L-serine. The protein operates within one-carbon metabolism; tetrahydrofolate interconversion. It functions in the pathway amino-acid biosynthesis; glycine biosynthesis; glycine from L-serine: step 1/1. In terms of biological role, catalyzes the reversible interconversion of serine and glycine with tetrahydrofolate (THF) serving as the one-carbon carrier. This reaction serves as the major source of one-carbon groups required for the biosynthesis of purines, thymidylate, methionine, and other important biomolecules. Also exhibits THF-independent aldolase activity toward beta-hydroxyamino acids, producing glycine and aldehydes, via a retro-aldol mechanism. This chain is Serine hydroxymethyltransferase, found in Actinobacillus pleuropneumoniae serotype 5b (strain L20).